The chain runs to 947 residues: Serine-aspartate repeat-containing protein C (947 aa).

The signal sequence occupies residues 1-50 (MNNKKTATNRKGMIPNRLNKFSIRKYSVGTASILVGTTLIFGLSGHEAKA). The segment at 51–164 (AEHTNGELNQ…STTPKTTTIK (114 aa)) is disordered. Positions 51–495 (AEHTNGELNQ…GSSTANGDQK (445 aa)) are ligand binding A region. The segment covering 56-71 (GELNQSKNETTAPSEN) has biased composition (polar residues). Residues 72 to 83 (KTTKKVDSRQLK) show a composition bias toward basic and acidic residues. Positions 84–155 (DNTQTATADQ…SNLTQAKDVS (72 aa)) are enriched in polar residues. CNA-B domains are found at residues 496 to 606 (KYNL…YKTP) and 607 to 717 (KYSL…EEET). The tract at residues 678–927 (TQTGTNTTED…NNSNNGTLFG (250 aa)) is disordered. Acidic residues-rich tracts occupy residues 685-695 (TEDDKDADGGE) and 712-886 (YYEE…DSDS). The short motif at 910-914 (LPETG) is the LPXTG sorting signal element. Positions 912-927 (ETGSENNNSNNGTLFG) are enriched in low complexity. The residue at position 913 (T913) is a Pentaglycyl murein peptidoglycan amidated threonine. Positions 914-947 (GSENNNSNNGTLFGGLFAALGSLLLFGRRKKQNK) are cleaved as a propeptide — removed by sortase.

It belongs to the serine-aspartate repeat-containing protein (SDr) family. As to quaternary structure, homodimerizes; via N2-Domain. Interacts with host NRXN1; this interaction mediates bacterial attachment to host cells.

It is found in the secreted. It localises to the cell wall. Cell surface-associated calcium-binding protein which plays an important role in adhesion and pathogenesis. Mediates interactions with components of the extracellular matrix such as host NRXN1 to promote bacterial adhesion. In Staphylococcus aureus (strain COL), this protein is Serine-aspartate repeat-containing protein C (sdrC).